The sequence spans 710 residues: Probable threonine--tRNA ligase 1, cytoplasmic (710 aa).

Residues 1–35 (MSDSQENKPVETPTEVKPVAEKKPAAEKKEKKPAV) form a disordered region. Over residues 18–33 (PVAEKKPAAEKKEKKP) the composition is skewed to basic and acidic residues. One can recognise a TGS domain in the interval 72–137 (KEEPINVTLP…EADCNLQLCK (66 aa)).

Belongs to the class-II aminoacyl-tRNA synthetase family.

It is found in the cytoplasm. It catalyses the reaction tRNA(Thr) + L-threonine + ATP = L-threonyl-tRNA(Thr) + AMP + diphosphate + H(+). This Dictyostelium discoideum (Social amoeba) protein is Probable threonine--tRNA ligase 1, cytoplasmic (thrS1).